The following is a 436-amino-acid chain: AMSH-like protease (436 aa).

At M1 the chain carries N-acetylmethionine. Residues S25 and S242 each carry the phosphoserine modification. The 129-residue stretch at 269 to 397 (VVLPEDLCHK…IFRLTNAGML (129 aa)) folds into the MPN domain. H347, H349, D360, H362, C402, H408, and H410 together coordinate Zn(2+). A JAMM motif motif is present at residues 347-360 (HTHPTQTAFLSSVD).

The protein belongs to the peptidase M67C family. Requires Zn(2+) as cofactor. Ubiquitously expressed.

Inhibited by UbV(SP.1), an ubiquitin variant that also inhibits STAMBP. Zinc metalloprotease that specifically cleaves 'Lys-63'-linked polyubiquitin chains. Acts as a positive regulator of the TORC1 signaling pathway by mediating 'Lys-63'-linked deubiquitination of SESN2, thereby inhibiting SESN2-interaction with the GATOR2 complex. Does not cleave 'Lys-48'-linked polyubiquitin chains. The sequence is that of AMSH-like protease from Homo sapiens (Human).